Here is a 361-residue protein sequence, read N- to C-terminus: Peptide chain release factor 1 (361 aa).

Residue Gln235 is modified to N5-methylglutamine.

It belongs to the prokaryotic/mitochondrial release factor family. Post-translationally, methylated by PrmC. Methylation increases the termination efficiency of RF1.

It localises to the cytoplasm. In terms of biological role, peptide chain release factor 1 directs the termination of translation in response to the peptide chain termination codons UAG and UAA. The sequence is that of Peptide chain release factor 1 from Buchnera aphidicola subsp. Acyrthosiphon pisum (strain 5A).